Consider the following 291-residue polypeptide: MTTLAIDIGGTKLAAALIDNNLRISQRRELPTPASKTPDALREALKALVEPLRAEARQVAIASTGIIQEGMLLALNPHNLGGLLHFPLVQTLETIAGLPTLAVNDAQAAAWAEYHALPDDIRDMVFITVSTGVGGGVVCDGKLLTGKGGLAGHLGHTLADPHGPVCGCGRVGCVEAIASGRGMAAAARDDLAGCDAKTLFIRAGEGHQQARHLVSQSAQVIARMIADVKAITDCQCVVIGGSVGLAEGYLEQVRAFLMQEPEPYHVALSAARYRHDAGLLGAALLAQGDTL.

Residues 5 to 12 (AIDIGGTK) and 132 to 139 (GVGGGVVC) contribute to the ATP site. Zn(2+)-binding residues include His156, Cys166, Cys168, and Cys173.

This sequence belongs to the ROK (NagC/XylR) family. NanK subfamily. As to quaternary structure, homodimer.

The enzyme catalyses an N-acyl-D-mannosamine + ATP = an N-acyl-D-mannosamine 6-phosphate + ADP + H(+). Its pathway is amino-sugar metabolism; N-acetylneuraminate degradation; D-fructose 6-phosphate from N-acetylneuraminate: step 2/5. Its function is as follows. Catalyzes the phosphorylation of N-acetylmannosamine (ManNAc) to ManNAc-6-P. The polypeptide is N-acetylmannosamine kinase (Salmonella typhi).